The chain runs to 270 residues: Formamidopyrimidine-DNA glycosylase (270 aa).

Catalysis depends on Pro2, which acts as the Schiff-base intermediate with DNA. Glu3 serves as the catalytic Proton donor. The active-site Proton donor; for beta-elimination activity is Lys58. Residues His90, Arg109, and Arg152 each contribute to the DNA site. The FPG-type zinc-finger motif lies at 237–270 (RVYGREGEACECGGAIVRVVQSGRSTFYCRKCQR). Residue Arg260 is the Proton donor; for delta-elimination activity of the active site.

The protein belongs to the FPG family. In terms of assembly, monomer. Zn(2+) serves as cofactor.

It catalyses the reaction Hydrolysis of DNA containing ring-opened 7-methylguanine residues, releasing 2,6-diamino-4-hydroxy-5-(N-methyl)formamidopyrimidine.. The catalysed reaction is 2'-deoxyribonucleotide-(2'-deoxyribose 5'-phosphate)-2'-deoxyribonucleotide-DNA = a 3'-end 2'-deoxyribonucleotide-(2,3-dehydro-2,3-deoxyribose 5'-phosphate)-DNA + a 5'-end 5'-phospho-2'-deoxyribonucleoside-DNA + H(+). Its function is as follows. Involved in base excision repair of DNA damaged by oxidation or by mutagenic agents. Acts as a DNA glycosylase that recognizes and removes damaged bases. Has a preference for oxidized purines, such as 7,8-dihydro-8-oxoguanine (8-oxoG). Has AP (apurinic/apyrimidinic) lyase activity and introduces nicks in the DNA strand. Cleaves the DNA backbone by beta-delta elimination to generate a single-strand break at the site of the removed base with both 3'- and 5'-phosphates. The chain is Formamidopyrimidine-DNA glycosylase from Sphingopyxis alaskensis (strain DSM 13593 / LMG 18877 / RB2256) (Sphingomonas alaskensis).